The chain runs to 217 residues: dITP/XTP pyrophosphatase (217 aa).

7–12 (SRNKKK) lines the substrate pocket. The Proton acceptor role is filled by aspartate 72. Residue aspartate 72 coordinates Mg(2+). Substrate is bound by residues serine 73, 163 to 166 (FGYD), lysine 195, and 200 to 201 (HR).

It belongs to the HAM1 NTPase family. In terms of assembly, homodimer. Mg(2+) is required as a cofactor.

The catalysed reaction is XTP + H2O = XMP + diphosphate + H(+). It catalyses the reaction dITP + H2O = dIMP + diphosphate + H(+). It carries out the reaction ITP + H2O = IMP + diphosphate + H(+). Functionally, pyrophosphatase that catalyzes the hydrolysis of nucleoside triphosphates to their monophosphate derivatives, with a high preference for the non-canonical purine nucleotides XTP (xanthosine triphosphate), dITP (deoxyinosine triphosphate) and ITP. Seems to function as a house-cleaning enzyme that removes non-canonical purine nucleotides from the nucleotide pool, thus preventing their incorporation into DNA/RNA and avoiding chromosomal lesions. This Corynebacterium jeikeium (strain K411) protein is dITP/XTP pyrophosphatase.